The following is a 411-amino-acid chain: 2,3-bisphosphoglycerate-independent phosphoglycerate mutase (411 aa).

It belongs to the BPG-independent phosphoglycerate mutase family. A-PGAM subfamily.

The catalysed reaction is (2R)-2-phosphoglycerate = (2R)-3-phosphoglycerate. It functions in the pathway carbohydrate degradation; glycolysis; pyruvate from D-glyceraldehyde 3-phosphate: step 3/5. Functionally, catalyzes the interconversion of 2-phosphoglycerate and 3-phosphoglycerate. This is 2,3-bisphosphoglycerate-independent phosphoglycerate mutase from Pyrobaculum aerophilum (strain ATCC 51768 / DSM 7523 / JCM 9630 / CIP 104966 / NBRC 100827 / IM2).